The primary structure comprises 143 residues: Large ribosomal subunit protein uL16 (143 aa).

Residues 1 to 14 (MLTPKRVKWRRQHR) are compositionally biased toward basic residues. Residues 1–23 (MLTPKRVKWRRQHRPDRAGKAKG) are disordered.

This sequence belongs to the universal ribosomal protein uL16 family. As to quaternary structure, part of the 50S ribosomal subunit.

Functionally, binds 23S rRNA and is also seen to make contacts with the A and possibly P site tRNAs. The chain is Large ribosomal subunit protein uL16 from Desulforudis audaxviator (strain MP104C).